Here is a 372-residue protein sequence, read N- to C-terminus: NAD(P)H-quinone oxidoreductase subunit 1 (372 aa).

Transmembrane regions (helical) follow at residues 27–47 (AIWM…GVLV), 97–117 (WLFL…YLIV), 130–150 (VGIF…LMAG), 176–196 (LALS…IDIV), 204–224 (ILGW…IAAL), 254–274 (FALF…VFAV), 308–328 (SLGI…AILL), and 351–371 (VSLV…FAFG).

This sequence belongs to the complex I subunit 1 family. In terms of assembly, NDH-1 is composed of at least 11 different subunits.

The protein resides in the cellular thylakoid membrane. The enzyme catalyses a plastoquinone + NADH + (n+1) H(+)(in) = a plastoquinol + NAD(+) + n H(+)(out). It catalyses the reaction a plastoquinone + NADPH + (n+1) H(+)(in) = a plastoquinol + NADP(+) + n H(+)(out). Functionally, NDH-1 shuttles electrons from an unknown electron donor, via FMN and iron-sulfur (Fe-S) centers, to quinones in the respiratory and/or the photosynthetic chain. The immediate electron acceptor for the enzyme in this species is believed to be plastoquinone. Couples the redox reaction to proton translocation, and thus conserves the redox energy in a proton gradient. In Microcystis aeruginosa (strain NIES-843 / IAM M-2473), this protein is NAD(P)H-quinone oxidoreductase subunit 1.